A 331-amino-acid chain; its full sequence is Aldo-keto reductase YhdN (331 aa).

NADP(+)-binding positions include 20 to 21 and Asp-52; that span reads TW. Tyr-57 acts as the Proton donor in catalysis. NADP(+)-binding positions include Gln-175, 203–208, Lys-214, Arg-227, 280–282, and Gln-286; these read YGSLCR and GAR.

The protein belongs to the aldo/keto reductase family. Aldo/keto reductase 11 subfamily. Monomer.

Its function is as follows. Aldo-keto reductase (AKR) that displays broad substrate specificity in vitro. Is able to reduce the standard AKR substrates DL-glyceraldehyde, D-erythrose, methylglyoxal, p-nitrobenzaldehyde, benzaldehyde and butyraldehyde, in the presence of NADPH. Cannot use NADH as a cosubstrate. Does not act on glucose, 2-pyridine carboxyaldehyde, fructose and xylose. The physiological function of this enzyme is not clear. May play a role in bacterial stress response and/or in detoxification of reactive aldehydes. This is Aldo-keto reductase YhdN (yhdN) from Bacillus subtilis (strain 168).